Consider the following 125-residue polypeptide: Small ribosomal subunit protein uS12m (125 aa).

It belongs to the universal ribosomal protein uS12 family.

Its subcellular location is the mitochondrion. Protein S12 is involved in the translation initiation step. The chain is Small ribosomal subunit protein uS12m (RPS12) from Allium cepa (Onion).